A 291-amino-acid polypeptide reads, in one-letter code: Homoserine kinase (291 aa).

P80–T90 lines the ATP pocket.

It belongs to the GHMP kinase family. Homoserine kinase subfamily.

It localises to the cytoplasm. The catalysed reaction is L-homoserine + ATP = O-phospho-L-homoserine + ADP + H(+). Its pathway is amino-acid biosynthesis; L-threonine biosynthesis; L-threonine from L-aspartate: step 4/5. Catalyzes the ATP-dependent phosphorylation of L-homoserine to L-homoserine phosphate. This Lactiplantibacillus plantarum (strain ATCC BAA-793 / NCIMB 8826 / WCFS1) (Lactobacillus plantarum) protein is Homoserine kinase.